A 223-amino-acid polypeptide reads, in one-letter code: Adenylate kinase 4, mitochondrial (223 aa).

A ribonucleoside 5'-triphosphate is bound at residue 15-20 (GSGKGT). The interval 35–64 (SSGHFLRENIKANTEVGDMAKQYIEKGLLV) is NMP. AMP contacts are provided by Ser-36 and Arg-41. Lys-60 carries the post-translational modification N6-succinyllysine. AMP is bound by residues 62–64 (LLV), 89–92 (GFPR), and Gln-96. The tract at residues 125–162 (RRWIHPPSGRVYNLDFNPPHVHGMDDVTGEPLVQQEDD) is LID. A ribonucleoside 5'-triphosphate is bound by residues Arg-126 and 135-136 (VY). Arg-170 is an AMP binding site. Lys-175 bears the N6-acetyllysine mark. An N6-acetyllysine; alternate mark is found at Lys-179 and Lys-186. 2 positions are modified to N6-succinyllysine; alternate: Lys-179 and Lys-186. Position 199 (Thr-199) interacts with a ribonucleoside 5'-triphosphate.

It belongs to the adenylate kinase family. AK3 subfamily. Monomer. Interacts with SLC25A5/ANT2.

Its subcellular location is the mitochondrion matrix. The catalysed reaction is a ribonucleoside 5'-phosphate + ATP = a ribonucleoside 5'-diphosphate + ADP. It catalyses the reaction AMP + ATP = 2 ADP. The enzyme catalyses GTP + AMP = GDP + ADP. It carries out the reaction CMP + ATP = CDP + ADP. The catalysed reaction is GTP + CMP = CDP + GDP. It catalyses the reaction dAMP + ATP = dADP + ADP. The enzyme catalyses dCMP + ATP = dCDP + ADP. It carries out the reaction a 2'-deoxyribonucleoside 5'-diphosphate + ATP = a 2'-deoxyribonucleoside 5'-triphosphate + ADP. The catalysed reaction is a ribonucleoside 5'-diphosphate + ATP = a ribonucleoside 5'-triphosphate + ADP. It catalyses the reaction GDP + ATP = GTP + ADP. The enzyme catalyses CDP + GTP = CTP + GDP. It carries out the reaction CDP + ATP = CTP + ADP. The catalysed reaction is UDP + ATP = UTP + ADP. It catalyses the reaction GTP + UDP = UTP + GDP. The enzyme catalyses dADP + GTP = dATP + GDP. It carries out the reaction dCDP + GTP = dCTP + GDP. The catalysed reaction is dCDP + ATP = dCTP + ADP. It catalyses the reaction dGDP + ATP = dGTP + ADP. The enzyme catalyses dTDP + GTP = dTTP + GDP. It carries out the reaction dTDP + ATP = dTTP + ADP. Its function is as follows. Broad-specificity mitochondrial nucleoside phosphate kinase involved in cellular nucleotide homeostasis by catalyzing nucleoside-phosphate interconversions. Similar to other adenylate kinases, preferentially catalyzes the phosphorylation of the nucleoside monophosphate AMP with ATP as phosphate donor to produce ADP. Phosphorylates only AMP when using GTP as phosphate donor. In vitro, can also catalyze the phosphorylation of CMP, dAMP and dCMP and use GTP as an alternate phosphate donor. Moreover, exhibits a diphosphate kinase activity, producing ATP, CTP, GTP, UTP, TTP, dATP, dCTP and dGTP from the corresponding diphosphate substrates with either ATP or GTP as phosphate donors. Plays a role in controlling cellular ATP levels by regulating phosphorylation and activation of the energy sensor protein kinase AMPK. Plays a protective role in the cellular response to oxidative stress. The protein is Adenylate kinase 4, mitochondrial of Bos taurus (Bovine).